The sequence spans 488 residues: MFAAGLAPFYASNFSLWSAAYCSSAGPGGCSFPLDPAAVKKPSFCIADILHAGVGDLGAAPEGLAGASAAALTAHLGSVHPHASFQAAARSPLRPTPVVAPSEVPAGFPQRLSPLSAAYHHHHPQQQQQQQQPQQQQPPPPPRAGALQPPASGTRVVPNPHHSGSAPAPSSKDLKFGIDRILSAEFDPKVKEGNTLRDLTSLLTGGRPAGVHLSGLQPSAGQFFASLDPINEASAILSPLNSNPRNSVQHQFQDTFPGPYAVLTKDTMPQTYKRKRSWSRAVFSNLQRKGLEKRFEIQKYVTKPDRKQLAAMLGLTDAQVKVWFQNRRMKWRHSKEAQAQKDKDKEAGEKPSGGAPAADGEQDERSPSRSEGEAESESSDSESLDMAPSDTERTEGSERSLHQTTVIKAPVTGALITASSAGSGGSSGGGGNSFSFSSASSLSSSSTSAGCASSLGGGGASELLPATQPTASSAPKSPEPAQGALGCL.

Disordered regions lie at residues 118-173 (AYHH…SSKD) and 331-488 (WRHS…LGCL). Low complexity-rich tracts occupy residues 125–135 (QQQQQQQQPQQ) and 158–171 (PNPH…APSS). Positions 276–335 (RSWSRAVFSNLQRKGLEKRFEIQKYVTKPDRKQLAAMLGLTDAQVKVWFQNRRMKWRHSK) form a DNA-binding region, homeobox. 2 stretches are compositionally biased toward basic and acidic residues: residues 334–349 (SKEA…EAGE) and 363–372 (DERSPSRSEG). Over residues 373–383 (EAESESSDSES) the composition is skewed to acidic residues. Residues 390–401 (DTERTEGSERSL) are compositionally biased toward basic and acidic residues. The segment covering 422–432 (GSGGSSGGGGN) has biased composition (gly residues). The segment covering 433–454 (SFSFSSASSLSSSSTSAGCASS) has biased composition (low complexity).

Belongs to the H2.0 homeobox family. In terms of tissue distribution, low level in normal B and T-cells, high level in activated lymphocytes and monocytes. Also found in thymus, tonsil, bone marrow, developing vessels, and fetal brain.

It localises to the nucleus. In terms of biological role, transcription factor required for TBX21/T-bet-dependent maturation of Th1 cells as well as maintenance of Th1-specific gene expression. Involved in embryogenesis and hematopoiesis. In Homo sapiens (Human), this protein is H2.0-like homeobox protein (HLX).